Reading from the N-terminus, the 160-residue chain is Putative UPF0479 protein YLR466C-A (160 aa).

2 helical membrane-spanning segments follow: residues 39 to 59 and 136 to 156; these read IVFC…KVLQ and VPMI…ISQH.

The protein belongs to the UPF0479 family.

It is found in the membrane. The sequence is that of Putative UPF0479 protein YLR466C-A from Saccharomyces cerevisiae (strain ATCC 204508 / S288c) (Baker's yeast).